The primary structure comprises 325 residues: D site-binding protein (325 aa).

Disordered regions lie at residues 1–99 (MARP…APGL), 127–200 (GLPP…DTVE), and 229–255 (RFSE…EQKD). Positions 17–28 (GPAGTPPGGGAL) are enriched in gly residues. 2 stretches are compositionally biased toward low complexity: residues 29–38 (LGLRSLLQGT) and 57–80 (ALPA…PAGA). Ser-86 is modified (phosphoserine). Residues 129 to 153 (PPSPPPPGGPSPEPSPARTPAPSPG) are compositionally biased toward pro residues. The segment covering 157-167 (CGSASPRSSPG) has biased composition (low complexity). Residues 255–318 (DEKYWSRRYK…SHYRAVLSRY (64 aa)) form the bZIP domain. The basic motif stretch occupies residues 257–279 (KYWSRRYKNNEAAKRSRDARRLK). Positions 283 to 297 (ISVRAAFLEKENALL) are leucine-zipper.

The protein belongs to the bZIP family. PAR subfamily. Binds DNA as a homodimer or a heterodimer. Can form a heterodimer with TEF. Ubiquitously expressed. Expressed in the suprachiasmatic nuclei (SCN) and in most peripheral tissues, with a strong circadian rhythmicity.

Its subcellular location is the nucleus. This transcriptional activator recognizes and binds to the sequence 5'-RTTAYGTAAY-3' found in the promoter of genes such as albumin, CYP2A4 and CYP2A5. It is not essential for circadian rhythm generation, but modulates important clock output genes. May be a direct target for regulation by the circadian pacemaker component clock. May affect circadian period and sleep regulation. The chain is D site-binding protein (DBP) from Homo sapiens (Human).